A 168-amino-acid chain; its full sequence is Urease accessory protein UreE (168 aa).

The interval P137–H168 is disordered. Residues G151–D161 show a composition bias toward basic residues.

This sequence belongs to the UreE family.

It localises to the cytoplasm. Functionally, involved in urease metallocenter assembly. Binds nickel. Probably functions as a nickel donor during metallocenter assembly. The polypeptide is Urease accessory protein UreE (Saccharophagus degradans (strain 2-40 / ATCC 43961 / DSM 17024)).